Reading from the N-terminus, the 158-residue chain is Sec-independent protein translocase protein TatB (158 aa).

The helical transmembrane segment at F2–G22 threads the bilayer. The tract at residues L86 to G158 is disordered. Polar residues-rich tracts occupy residues Q88–T107, Q113–T136, and E143–G158.

Belongs to the TatB family. The Tat system comprises two distinct complexes: a TatABC complex, containing multiple copies of TatA, TatB and TatC subunits, and a separate TatA complex, containing only TatA subunits. Substrates initially bind to the TatABC complex, which probably triggers association of the separate TatA complex to form the active translocon.

It localises to the cell inner membrane. Functionally, part of the twin-arginine translocation (Tat) system that transports large folded proteins containing a characteristic twin-arginine motif in their signal peptide across membranes. Together with TatC, TatB is part of a receptor directly interacting with Tat signal peptides. TatB may form an oligomeric binding site that transiently accommodates folded Tat precursor proteins before their translocation. The polypeptide is Sec-independent protein translocase protein TatB (Shewanella putrefaciens (strain CN-32 / ATCC BAA-453)).